Reading from the N-terminus, the 340-residue chain is DNA-directed RNA polymerase subunit alpha (340 aa).

Positions 1 to 236 (MLSLSKNWNT…EQLQLFIAFE (236 aa)) are alpha N-terminal domain (alpha-NTD). The alpha C-terminal domain (alpha-CTD) stretch occupies residues 251 to 340 (FSPYLLKRVD…LSKRYEDSYN (90 aa)).

This sequence belongs to the RNA polymerase alpha chain family. As to quaternary structure, homodimer. The RNAP catalytic core consists of 2 alpha, 1 beta, 1 beta' and 1 omega subunit. When a sigma factor is associated with the core the holoenzyme is formed, which can initiate transcription.

The catalysed reaction is RNA(n) + a ribonucleoside 5'-triphosphate = RNA(n+1) + diphosphate. Functionally, DNA-dependent RNA polymerase catalyzes the transcription of DNA into RNA using the four ribonucleoside triphosphates as substrates. The chain is DNA-directed RNA polymerase subunit alpha from Rickettsia prowazekii (strain Madrid E).